The following is a 181-amino-acid chain: Adenine phosphoribosyltransferase (181 aa).

The protein belongs to the purine/pyrimidine phosphoribosyltransferase family. As to quaternary structure, homodimer.

It is found in the cytoplasm. It catalyses the reaction AMP + diphosphate = 5-phospho-alpha-D-ribose 1-diphosphate + adenine. It participates in purine metabolism; AMP biosynthesis via salvage pathway; AMP from adenine: step 1/1. Functionally, catalyzes a salvage reaction resulting in the formation of AMP, that is energically less costly than de novo synthesis. This chain is Adenine phosphoribosyltransferase, found in Brucella suis (strain ATCC 23445 / NCTC 10510).